Reading from the N-terminus, the 304-residue chain is Cell surface-binding protein OPG105 (304 aa).

The Alpha-carbonic anhydrase domain maps to 1–235; it reads MSQQLSPINI…NDDTEVYYSG (235 aa). Residues 1-275 lie on the Virion surface side of the membrane; that stretch reads MSQQLSPINI…YQKYIEGNKT (275 aa). Residues 276 to 294 form a helical membrane-spanning segment; it reads FAIIAIVFVYILTAILFLM. Residues 295–304 are Intravirion-facing; it reads SRRYSREKQN.

It belongs to the alpha-carbonic anhydrase family. As to quaternary structure, homodimer; disulfide-linked. Post-translationally, apparently non-glycosylated.

Its subcellular location is the virion membrane. Functionally, binds to chondroitin sulfate on the cell surface to provide virion attachment to target cell. This is Cell surface-binding protein OPG105 (OPG105) from Homo sapiens (Human).